Reading from the N-terminus, the 336-residue chain is Biotin synthase (336 aa).

The region spanning asparagine 54–arginine 281 is the Radical SAM core domain. Residues cysteine 69, cysteine 73, and cysteine 76 each coordinate [4Fe-4S] cluster. Residues cysteine 113, cysteine 144, cysteine 204, and arginine 276 each contribute to the [2Fe-2S] cluster site.

It belongs to the radical SAM superfamily. Biotin synthase family. As to quaternary structure, homodimer. [4Fe-4S] cluster serves as cofactor. It depends on [2Fe-2S] cluster as a cofactor.

It carries out the reaction (4R,5S)-dethiobiotin + (sulfur carrier)-SH + 2 reduced [2Fe-2S]-[ferredoxin] + 2 S-adenosyl-L-methionine = (sulfur carrier)-H + biotin + 2 5'-deoxyadenosine + 2 L-methionine + 2 oxidized [2Fe-2S]-[ferredoxin]. The protein operates within cofactor biosynthesis; biotin biosynthesis; biotin from 7,8-diaminononanoate: step 2/2. In terms of biological role, catalyzes the conversion of dethiobiotin (DTB) to biotin by the insertion of a sulfur atom into dethiobiotin via a radical-based mechanism. This is Biotin synthase from Burkholderia mallei (strain ATCC 23344).